Reading from the N-terminus, the 151-residue chain is Protein InSETG-4 (151 aa).

Its subcellular location is the cytoplasm. The protein localises to the cytosol. This chain is Protein InSETG-4 (InSet4-G), found in Homo sapiens (Human).